A 207-amino-acid chain; its full sequence is N-(5'-phosphoribosyl)anthranilate isomerase (207 aa).

Belongs to the TrpF family.

It carries out the reaction N-(5-phospho-beta-D-ribosyl)anthranilate = 1-(2-carboxyphenylamino)-1-deoxy-D-ribulose 5-phosphate. Its pathway is amino-acid biosynthesis; L-tryptophan biosynthesis; L-tryptophan from chorismate: step 3/5. This Halorhodospira halophila (strain DSM 244 / SL1) (Ectothiorhodospira halophila (strain DSM 244 / SL1)) protein is N-(5'-phosphoribosyl)anthranilate isomerase.